We begin with the raw amino-acid sequence, 505 residues long: Deoxyguanosinetriphosphate triphosphohydrolase (505 aa).

One can recognise an HD domain in the interval 66–273 (RLTHSMEVQQ…MEAADDISYC (208 aa)).

Belongs to the dGTPase family. Type 1 subfamily. Homotetramer. It depends on Mg(2+) as a cofactor.

The enzyme catalyses dGTP + H2O = 2'-deoxyguanosine + triphosphate + H(+). In terms of biological role, dGTPase preferentially hydrolyzes dGTP over the other canonical NTPs. The polypeptide is Deoxyguanosinetriphosphate triphosphohydrolase (Salmonella schwarzengrund (strain CVM19633)).